An 875-amino-acid chain; its full sequence is Neurotrypsin (875 aa).

A signal peptide spans 1–20 (MTLARFALALLFGVLPEVVG). Asn-26 is a glycosylation site (N-linked (GlcNAc...) asparagine). The interval 51 to 72 (QRHRRTRPPPPLPRFPRPPRAL) is disordered. Positions 58 to 71 (PPPPLPRFPRPPRA) are enriched in pro residues. One can recognise a Kringle domain in the interval 93–165 (CPAGEPWVSV…GKVDWGYCDC (73 aa)). 20 disulfides stabilise this stretch: Cys-93–Cys-165, Cys-109–Cys-149, Cys-138–Cys-163, Cys-195–Cys-259, Cys-208–Cys-269, Cys-239–Cys-249, Cys-305–Cys-369, Cys-318–Cys-379, Cys-349–Cys-359, Cys-412–Cys-475, Cys-425–Cys-485, Cys-455–Cys-465, Cys-525–Cys-589, Cys-538–Cys-599, Cys-569–Cys-579, Cys-619–Cys-750, Cys-661–Cys-677, Cys-765–Cys-831, Cys-794–Cys-808, and Cys-821–Cys-850. 4 consecutive SRCR domains span residues 170 to 271 (VRLR…MCSF), 280 to 381 (IRLV…SCTP), 387 to 487 (IRLA…ACYP), and 500 to 601 (VRLM…ICDY). A zymogen activation region region spans residues 619-630 (CGLRLLHRRQKR). The Peptidase S1 domain maps to 631–874 (IIGGKNSLRG…FVPWIKSVTK (244 aa)). His-676 functions as the Charge relay system in the catalytic mechanism. Asn-683 carries N-linked (GlcNAc...) asparagine glycosylation. Asp-726 (charge relay system) is an active-site residue. Ser-825 serves as the catalytic Charge relay system.

The protein belongs to the peptidase S1 family.

It localises to the secreted. Its function is as follows. Plays a role in neuronal plasticity and the proteolytic action may subserve structural reorganizations associated with learning and memory operations. The chain is Neurotrypsin (PRSS12) from Saguinus labiatus (Red-chested mustached tamarin).